The primary structure comprises 184 residues: Ribosome-recycling factor (184 aa).

This sequence belongs to the RRF family.

The protein resides in the cytoplasm. Responsible for the release of ribosomes from messenger RNA at the termination of protein biosynthesis. May increase the efficiency of translation by recycling ribosomes from one round of translation to another. In Clostridium botulinum (strain Loch Maree / Type A3), this protein is Ribosome-recycling factor.